The sequence spans 304 residues: Coenzyme PQQ synthesis protein B (304 aa).

The protein belongs to the PqqB family.

It participates in cofactor biosynthesis; pyrroloquinoline quinone biosynthesis. Its function is as follows. May be involved in the transport of PQQ or its precursor to the periplasm. This chain is Coenzyme PQQ synthesis protein B, found in Stutzerimonas stutzeri (Pseudomonas stutzeri).